The primary structure comprises 333 residues: Transcription initiation factor IIB (333 aa).

The segment at 33–64 adopts a TFIIB-type zinc-finger fold; the sequence is EVYRCPICGNDRFVYNYERGEIVCIVCGAVVQ. The Zn(2+) site is built by C37, C40, C56, and C59. Tandem repeats lie at residues 149-232 and 243-324.

The protein belongs to the TFIIB family.

Functionally, stabilizes TBP binding to an archaeal box-A promoter. Also responsible for recruiting RNA polymerase II to the pre-initiation complex (DNA-TBP-TFIIB). In Pyrobaculum islandicum (strain DSM 4184 / JCM 9189 / GEO3), this protein is Transcription initiation factor IIB.